A 335-amino-acid chain; its full sequence is N-acetylglucosaminyl-phosphatidylinositol de-N-acetylase (335 aa).

A helical membrane pass occupies residues 3-23 (SAFTFLSLAIFPLALFIFWTL). Asparagine 128 and asparagine 153 each carry an N-linked (GlcNAc...) asparagine glycan.

Belongs to the PIGL family.

Its subcellular location is the endoplasmic reticulum membrane. The catalysed reaction is a 6-(N-acetyl-alpha-D-glucosaminyl)-1-(1,2-diacyl-sn-glycero-3-phospho)-1D-myo-inositol + H2O = a 6-(alpha-D-glucosaminyl)-1-(1,2-diacyl-sn-glycero-3-phospho)-1D-myo-inositol + acetate. It participates in glycolipid biosynthesis; glycosylphosphatidylinositol-anchor biosynthesis. Functionally, involved in the second step of GPI biosynthesis. De-N-acetylation of N-acetylglucosaminyl-phosphatidylinositol. The chain is N-acetylglucosaminyl-phosphatidylinositol de-N-acetylase from Arthroderma benhamiae (strain ATCC MYA-4681 / CBS 112371) (Trichophyton mentagrophytes).